Consider the following 353-residue polypeptide: Ribosome biogenesis protein BRX1 homolog (353 aa).

Over residues methionine 1–glycine 10 the composition is skewed to basic residues. Residues methionine 1–arginine 46 are disordered. The segment covering asparagine 22–alanine 36 has biased composition (basic and acidic residues). The 190-residue stretch at glutamate 60–glycine 249 folds into the Brix domain. A Glycyl lysine isopeptide (Lys-Gly) (interchain with G-Cter in SUMO2) cross-link involves residue lysine 160. The residue at position 261 (serine 261) is a Phosphoserine. N6-acetyllysine is present on lysine 276. Residues lysine 314 and lysine 322 each participate in a glycyl lysine isopeptide (Lys-Gly) (interchain with G-Cter in SUMO2) cross-link.

Belongs to the BRX1 family.

Its subcellular location is the nucleus. The protein resides in the nucleolus. Required for biogenesis of the 60S ribosomal subunit. This Pongo abelii (Sumatran orangutan) protein is Ribosome biogenesis protein BRX1 homolog (BRIX1).